The chain runs to 136 residues: Histone H3.1 (136 aa).

The segment at 1–41 is disordered; that stretch reads MARTKQTARKSTGGKAPRKQLATKAARKSAPAAGGVKKPHR. Lysine 5 carries the post-translational modification N6,N6,N6-trimethyllysine; alternate. Lysine 5 carries the N6,N6-dimethyllysine; alternate modification. Residues lysine 5 and lysine 10 each carry the N6-methyllysine; alternate modification. Lysine 10 carries the post-translational modification N6-acetyllysine; alternate. At serine 11 the chain carries Phosphoserine. Lysine 15 is subject to N6,N6-dimethyllysine; alternate. N6-acetyllysine; alternate is present on residues lysine 15, lysine 19, lysine 24, lysine 28, and lysine 37. 4 positions are modified to N6-methyllysine; alternate: lysine 19, lysine 24, lysine 28, and lysine 37. The segment covering 22-33 has biased composition (low complexity); the sequence is ATKAARKSAPAA. 2 positions are modified to N6,N6,N6-trimethyllysine; alternate: lysine 28 and lysine 37. N6,N6-dimethyllysine; alternate occurs at positions 28 and 37. Lysine 57 and lysine 65 each carry N6-acetyllysine. At lysine 80 the chain carries N6,N6,N6-trimethyllysine; alternate. Lysine 80 is subject to N6,N6-dimethyllysine; alternate. The residue at position 80 (lysine 80) is an N6-methyllysine; alternate.

This sequence belongs to the histone H3 family. As to quaternary structure, the nucleosome is a histone octamer containing two molecules each of H2A, H2B, H3 and H4 assembled in one H3-H4 heterotetramer and two H2A-H2B heterodimers. The octamer wraps approximately 147 bp of DNA. In terms of processing, phosphorylated to form H3S10ph. H3S10ph promotes subsequent H3K14ac formation and is required for transcriptional activation through TBP recruitment to the promoters. Post-translationally, mono-, di- and trimethylated by the COMPASS complex to form H3K4me1/2/3. H3K4me activates gene expression by regulating transcription elongation and plays a role in telomere length maintenance. H3K4me enrichment correlates with transcription levels, and occurs in a 5' to 3' gradient with H3K4me3 enrichment at the 5'-end of genes, shifting to H3K4me2 and then H3K4me1. Methylated by SET2 to form H3K36me. H3K36me represses gene expression. Methylated by DOT1 to form H3K79me. H3K79me is required for association of SIR proteins with telomeric regions and for telomeric silencing. The COMPASS-mediated formation of H3K4me2/3 and the DOT1-mediated formation of H3K79me require H2BK123ub1. Acetylation of histone H3 leads to transcriptional activation. H3K14ac formation by GCN5 is promoted by H3S10ph. H3K14ac can also be formed by ESA1. H3K56ac formation occurs predominantly in newly synthesized H3 molecules during G1, S and G2/M of the cell cycle and may be involved in DNA repair.

It localises to the nucleus. Its subcellular location is the chromosome. Functionally, core component of nucleosome. Nucleosomes wrap and compact DNA into chromatin, limiting DNA accessibility to the cellular machineries which require DNA as a template. Histones thereby play a central role in transcription regulation, DNA repair, DNA replication and chromosomal stability. DNA accessibility is regulated via a complex set of post-translational modifications of histones, also called histone code, and nucleosome remodeling. In Mycosarcoma maydis (Corn smut fungus), this protein is Histone H3.1 (HHT1).